A 214-amino-acid chain; its full sequence is MFITLEGIEGAGKTTQLPRLVDFLEQHGHTCVVTREPGGTGMGQKIRSLLLDPDNSDMSPETELFLYAADRAQHVRRLIEPALAEGKTVVCDRFADATEVYQGWARGLDMELVQVLNRVATGGRKPDITLLFDLPPEAGLKRAWQRIARNGKEAADCRFENEKMAFHERVRHGYLDLARREPERFVVIDALGPAAEVAGRMIAALERVPDINRP.

7–14 (GIEGAGKT) contributes to the ATP binding site.

This sequence belongs to the thymidylate kinase family.

It catalyses the reaction dTMP + ATP = dTDP + ADP. In terms of biological role, phosphorylation of dTMP to form dTDP in both de novo and salvage pathways of dTTP synthesis. This chain is Thymidylate kinase, found in Desulfosudis oleivorans (strain DSM 6200 / JCM 39069 / Hxd3) (Desulfococcus oleovorans).